A 256-amino-acid polypeptide reads, in one-letter code: Ubiquinone/menaquinone biosynthesis C-methyltransferase UbiE (256 aa).

Residues Thr-79, Asp-100, and 128 to 129 each bind S-adenosyl-L-methionine; that span reads DA.

The protein belongs to the class I-like SAM-binding methyltransferase superfamily. MenG/UbiE family.

It catalyses the reaction a 2-demethylmenaquinol + S-adenosyl-L-methionine = a menaquinol + S-adenosyl-L-homocysteine + H(+). The catalysed reaction is a 2-methoxy-6-(all-trans-polyprenyl)benzene-1,4-diol + S-adenosyl-L-methionine = a 5-methoxy-2-methyl-3-(all-trans-polyprenyl)benzene-1,4-diol + S-adenosyl-L-homocysteine + H(+). Its pathway is quinol/quinone metabolism; menaquinone biosynthesis; menaquinol from 1,4-dihydroxy-2-naphthoate: step 2/2. It functions in the pathway cofactor biosynthesis; ubiquinone biosynthesis. Its function is as follows. Methyltransferase required for the conversion of demethylmenaquinol (DMKH2) to menaquinol (MKH2) and the conversion of 2-polyprenyl-6-methoxy-1,4-benzoquinol (DDMQH2) to 2-polyprenyl-3-methyl-6-methoxy-1,4-benzoquinol (DMQH2). This Pseudomonas aeruginosa (strain LESB58) protein is Ubiquinone/menaquinone biosynthesis C-methyltransferase UbiE.